The chain runs to 613 residues: Threonine--tRNA ligase (613 aa).

The editing domain stretch occupies residues 1 to 147 (MRLLLIHARS…TITPQESAPQ (147 aa)). Catalytic regions lie at residues 199-495 (PRYI…PALP) and 200-495 (RYID…PALP). Zn(2+)-binding residues include Cys292, His343, and His464.

Belongs to the class-II aminoacyl-tRNA synthetase family. As to quaternary structure, homodimer. Zn(2+) serves as cofactor.

The protein resides in the cytoplasm. The catalysed reaction is tRNA(Thr) + L-threonine + ATP = L-threonyl-tRNA(Thr) + AMP + diphosphate + H(+). Its function is as follows. Catalyzes the attachment of threonine to tRNA(Thr) in a two-step reaction: L-threonine is first activated by ATP to form Thr-AMP and then transferred to the acceptor end of tRNA(Thr). Also edits incorrectly charged L-seryl-tRNA(Thr). The chain is Threonine--tRNA ligase from Caldivirga maquilingensis (strain ATCC 700844 / DSM 13496 / JCM 10307 / IC-167).